Here is a 142-residue protein sequence, read N- to C-terminus: ATP synthase epsilon chain (142 aa).

This sequence belongs to the ATPase epsilon chain family. As to quaternary structure, F-type ATPases have 2 components, CF(1) - the catalytic core - and CF(0) - the membrane proton channel. CF(1) has five subunits: alpha(3), beta(3), gamma(1), delta(1), epsilon(1). CF(0) has three main subunits: a, b and c.

It is found in the cell inner membrane. In terms of biological role, produces ATP from ADP in the presence of a proton gradient across the membrane. In Koribacter versatilis (strain Ellin345), this protein is ATP synthase epsilon chain.